The primary structure comprises 298 residues: Thymidylate synthase (298 aa).

DUMP contacts are provided by residues R25 and 159–160 (RR). The active-site Nucleophile is C179. DUMP-binding positions include 200–203 (RSVD), N211, and 241–243 (HLY). D203 serves as a coordination point for (6R)-5,10-methylene-5,6,7,8-tetrahydrofolate. Position 297 (A297) interacts with (6R)-5,10-methylene-5,6,7,8-tetrahydrofolate.

This sequence belongs to the thymidylate synthase family. Bacterial-type ThyA subfamily. In terms of assembly, homodimer.

It is found in the cytoplasm. The enzyme catalyses dUMP + (6R)-5,10-methylene-5,6,7,8-tetrahydrofolate = 7,8-dihydrofolate + dTMP. It participates in pyrimidine metabolism; dTTP biosynthesis. In terms of biological role, catalyzes the reductive methylation of 2'-deoxyuridine-5'-monophosphate (dUMP) to 2'-deoxythymidine-5'-monophosphate (dTMP) while utilizing 5,10-methylenetetrahydrofolate (mTHF) as the methyl donor and reductant in the reaction, yielding dihydrofolate (DHF) as a by-product. This enzymatic reaction provides an intracellular de novo source of dTMP, an essential precursor for DNA biosynthesis. The chain is Thymidylate synthase from Cereibacter sphaeroides (strain ATCC 17025 / ATH 2.4.3) (Rhodobacter sphaeroides).